Here is a 399-residue protein sequence, read N- to C-terminus: Elongation factor Tu (399 aa).

Residues 10-209 (KPHVNIGTIG…AVDSYIPTPT (200 aa)) enclose the tr-type G domain. Residues 19–26 (GHVDHGKT) are G1. Residue 19-26 (GHVDHGKT) participates in GTP binding. Thr26 lines the Mg(2+) pocket. Residues 60–64 (GITIA) form a G2 region. The segment at 81-84 (DCPG) is G3. Residues 81–85 (DCPGH) and 136–139 (NKAD) each bind GTP. Residues 136-139 (NKAD) form a G4 region. The interval 174-176 (SAL) is G5.

The protein belongs to the TRAFAC class translation factor GTPase superfamily. Classic translation factor GTPase family. EF-Tu/EF-1A subfamily. In terms of assembly, monomer.

It localises to the cytoplasm. The enzyme catalyses GTP + H2O = GDP + phosphate + H(+). In terms of biological role, GTP hydrolase that promotes the GTP-dependent binding of aminoacyl-tRNA to the A-site of ribosomes during protein biosynthesis. This is Elongation factor Tu from Campylobacter jejuni (strain RM1221).